We begin with the raw amino-acid sequence, 353 residues long: MKMFITMSMCLSVIACFYAGVGTGETLVPALIIMGDSVVDAGNNNHRITLVKANFPPYGRDFVAHSATGRFSNGKLATDFTAENLGFTSYPVAYLSQEANETNLLTGANFASGASGFDDATAIFYNAITLSQQLKNYKEYQNKVTNIVGKERANEIFSGAIHLLSTGSSDFLQSYYINPILNRIFTPDQYSDHLLRSYSTFVQNLYGLGARRIGVTTLPPLGCLPAAITLFGGVGNNMCVERLNQDAVSFNTKLNNTSINLTNNLPGLKLVVFDIYNPLLNMVINPVEYGFFESRRACCGTGTMETSFLCNALSVGTCSNATNYVFWDGFHPSEAANRVIANNLLVQGIPLIS.

The N-terminal stretch at 1–24 is a signal peptide; it reads MKMFITMSMCLSVIACFYAGVGTG. The Nucleophile role is filled by serine 37. 5 N-linked (GlcNAc...) asparagine glycosylation sites follow: asparagine 100, asparagine 255, asparagine 256, asparagine 260, and asparagine 320. Active-site residues include aspartate 328 and histidine 331.

Belongs to the 'GDSL' lipolytic enzyme family.

It is found in the secreted. This is GDSL esterase/lipase At5g03810 from Arabidopsis thaliana (Mouse-ear cress).